The primary structure comprises 432 residues: Adenylosuccinate synthetase 2 (432 aa).

GTP-binding positions include 13-19 and 41-43; these read GDEGKGK and GHT. D14 functions as the Proton acceptor in the catalytic mechanism. Mg(2+) is bound by residues D14 and G41. IMP is bound by residues 14–17, 39–42, T130, R144, Q225, T240, and R304; these read DEGK and NAGH. The active-site Proton donor is the H42. 300–306 contacts substrate; it reads ATTGRSR. GTP-binding positions include R306, 332 to 334, and 415 to 417; these read KLD and STG.

Belongs to the adenylosuccinate synthetase family. As to quaternary structure, homodimer. Mg(2+) is required as a cofactor.

The protein resides in the cytoplasm. It carries out the reaction IMP + L-aspartate + GTP = N(6)-(1,2-dicarboxyethyl)-AMP + GDP + phosphate + 2 H(+). Its pathway is purine metabolism; AMP biosynthesis via de novo pathway; AMP from IMP: step 1/2. In terms of biological role, plays an important role in the de novo pathway of purine nucleotide biosynthesis. Catalyzes the first committed step in the biosynthesis of AMP from IMP. The chain is Adenylosuccinate synthetase 2 from Photorhabdus laumondii subsp. laumondii (strain DSM 15139 / CIP 105565 / TT01) (Photorhabdus luminescens subsp. laumondii).